A 260-amino-acid polypeptide reads, in one-letter code: Thiazole synthase (260 aa).

The active-site Schiff-base intermediate with DXP is Lys102. 1-deoxy-D-xylulose 5-phosphate contacts are provided by residues Gly163, 189 to 190 (AG), and 211 to 212 (NT).

It belongs to the ThiG family. As to quaternary structure, homotetramer. Forms heterodimers with either ThiH or ThiS.

It is found in the cytoplasm. The enzyme catalyses [ThiS sulfur-carrier protein]-C-terminal-Gly-aminoethanethioate + 2-iminoacetate + 1-deoxy-D-xylulose 5-phosphate = [ThiS sulfur-carrier protein]-C-terminal Gly-Gly + 2-[(2R,5Z)-2-carboxy-4-methylthiazol-5(2H)-ylidene]ethyl phosphate + 2 H2O + H(+). Its pathway is cofactor biosynthesis; thiamine diphosphate biosynthesis. Its function is as follows. Catalyzes the rearrangement of 1-deoxy-D-xylulose 5-phosphate (DXP) to produce the thiazole phosphate moiety of thiamine. Sulfur is provided by the thiocarboxylate moiety of the carrier protein ThiS. In vitro, sulfur can be provided by H(2)S. In Citrifermentans bemidjiense (strain ATCC BAA-1014 / DSM 16622 / JCM 12645 / Bem) (Geobacter bemidjiensis), this protein is Thiazole synthase.